Here is a 182-residue protein sequence, read N- to C-terminus: Large ribosomal subunit protein uL5 (182 aa).

This sequence belongs to the universal ribosomal protein uL5 family. In terms of assembly, part of the 50S ribosomal subunit; part of the 5S rRNA/L5/L18/L25 subcomplex. Contacts the 5S rRNA and the P site tRNA. Forms a bridge to the 30S subunit in the 70S ribosome.

In terms of biological role, this is one of the proteins that bind and probably mediate the attachment of the 5S RNA into the large ribosomal subunit, where it forms part of the central protuberance. In the 70S ribosome it contacts protein S13 of the 30S subunit (bridge B1b), connecting the 2 subunits; this bridge is implicated in subunit movement. Contacts the P site tRNA; the 5S rRNA and some of its associated proteins might help stabilize positioning of ribosome-bound tRNAs. This is Large ribosomal subunit protein uL5 from Thermosipho melanesiensis (strain DSM 12029 / CIP 104789 / BI429).